The sequence spans 301 residues: NAD kinase (301 aa).

D73 functions as the Proton acceptor in the catalytic mechanism. Residues 73-74, 160-161, R188, D190, A198, 201-206, A225, and Q257 contribute to the NAD(+) site; these read DG, NE, and TAYNIS.

The protein belongs to the NAD kinase family. A divalent metal cation is required as a cofactor.

The protein resides in the cytoplasm. It catalyses the reaction NAD(+) + ATP = ADP + NADP(+) + H(+). In terms of biological role, involved in the regulation of the intracellular balance of NAD and NADP, and is a key enzyme in the biosynthesis of NADP. Catalyzes specifically the phosphorylation on 2'-hydroxyl of the adenosine moiety of NAD to yield NADP. This Helicobacter hepaticus (strain ATCC 51449 / 3B1) protein is NAD kinase.